Reading from the N-terminus, the 178-residue chain is MKIQDYTKEMVDEKSFIDMAYTLLNDKQTTMNLYDIIDEFKSLGGYEYEDIENRIVQFYTDLNTDGRFLNVGENLWGLRDWYSVDDIEEKIAPTIQKFDILDDEDEEDQNLKLLGDDDADEDDDIPAQTDDQETLDESDNDEDDVEMNEADIVIDEDEDEDIAEGEEEAFEDAEDFND.

The HTH HARE-type domain maps to 14 to 81; sequence KSFIDMAYTL…GENLWGLRDW (68 aa). The tract at residues 114–178 is disordered; it reads LGDDDADEDD…AFEDAEDFND (65 aa). Residues 116–178 show a composition bias toward acidic residues; the sequence is DDDADEDDDI…AFEDAEDFND (63 aa).

It belongs to the RpoE family. In terms of assembly, RNAP is composed of a core of 2 alpha, a beta and a beta' subunits. The core is associated with a delta subunit and one of several sigma factors.

Its function is as follows. Participates in both the initiation and recycling phases of transcription. In the presence of the delta subunit, RNAP displays an increased specificity of transcription, a decreased affinity for nucleic acids, and an increased efficiency of RNA synthesis because of enhanced recycling. This chain is Probable DNA-directed RNA polymerase subunit delta, found in Staphylococcus epidermidis (strain ATCC 35984 / DSM 28319 / BCRC 17069 / CCUG 31568 / BM 3577 / RP62A).